We begin with the raw amino-acid sequence, 526 residues long: MDILQLAPTHLLAILLSSTSALFLITYLLRAGHRPSDLPNGPPTVPLFGNELQVPKSDAHFQFSRWAKEYGGFFTLKRYNNTTIVISDQKLIKTLLDKKSNIYSHRPASLVSHLITQSDHLLVMQYGERWRMLRKTIHQYFMEPRCERDHWKVQEAEAKQMLHDYLTMPEDHMLHPKRYSNSITNSLVFGIRTKTVHDEYMKKLFYLMDKWSLVQELGATPPVDSFALLRYVPQWMLGNWRNRAVEVGDLMQSLYQTVLDQVKERRQRGIQRDSFMDRVLDTLKQTPLSENELRFLGGVLMEGGSDTSSSLILTIIQAMTKYPEVQAKAHAQIDSIIGHNRSPAWSDWSKLPYINMIIKESHRWRPVSPLGVPHAVAEDDHIDGKLIPQGSSIVLNVWGMHHDSDRWQEPEHFQPERFADFPALASGYAGSERRDHLGYGAGRRICPGIHLAERNLIIGIAKLLWAFEFLEPLGSDSDISAHSGASKGFLHCPKDYGCVIRLRSPEKRETIMREFAEAQEVFARFD.

Over 1–6 the chain is Cytoplasmic; the sequence is MDILQL. The chain crosses the membrane as a helical span at residues 7-29; sequence APTHLLAILLSSTSALFLITYLL. Residues 30–526 lie on the Lumenal side of the membrane; sequence RAGHRPSDLP…EAQEVFARFD (497 aa). N-linked (GlcNAc...) asparagine glycosylation occurs at N81. Residue C446 participates in heme binding.

The protein belongs to the cytochrome P450 family. The cofactor is heme.

The protein resides in the endoplasmic reticulum membrane. It carries out the reaction 3-hydroxybenzyl alcohol + reduced [NADPH--hemoprotein reductase] + O2 = gentisyl alcohol + oxidized [NADPH--hemoprotein reductase] + H2O + H(+). It functions in the pathway mycotoxin biosynthesis; patulin biosynthesis. In terms of biological role, cytochrome P450 monooxygenase; part of the gene cluster that mediates the biosynthesis of patulin, an acetate-derived tetraketide mycotoxin produced by several fungal species that shows antimicrobial properties against several bacteria. PatI catalyzes the conversion of m-hydroxybenzyl alcohol into gentisyl alcohol. The pathway begins with the synthesis of 6-methylsalicylic acid by the polyketide synthase (PKS) patK via condensation of acetate and malonate units. The 6-methylsalicylic acid decarboxylase patG then catalyzes the decarboxylation of 6-methylsalicylic acid to yield m-cresol (also known as 3-methylphenol). These first reactions occur in the cytosol. The intermediate m-cresol is then transported into the endoplasmic reticulum where the cytochrome P450 monooxygenase patH converts it to m-hydroxybenzyl alcohol, which is further converted to gentisyl alcohol by the cytochrome P450 monooxygenase patI. The oxidoreductases patJ and patO further convert gentisyl alcohol to isoepoxydon in the vacuole. PatN catalyzes then the transformation of isoepoxydon into phyllostine. The cluster protein patF is responsible for the conversion from phyllostine to neopatulin whereas the alcohol dehydrogenase patD converts neopatulin to E-ascladiol. The steps between isoepoxydon and E-ascladiol occur in the cytosol, and E-ascladiol is probably secreted to the extracellular space by one of the cluster-specific transporters patC or patM. Finally, the secreted patulin synthase patE catalyzes the conversion of E-ascladiol to patulin. The chain is Cytochrome P450 monooxygenase patI from Penicillium expansum (Blue mold rot fungus).